The primary structure comprises 383 residues: Homoserine O-succinyltransferase (383 aa).

In terms of domain architecture, AB hydrolase-1 spans 51–361; it reads NALLICHALS…ESDFGHDAFL (311 aa). S157 functions as the Nucleophile in the catalytic mechanism. R227 is a binding site for substrate. Residues D324 and H357 contribute to the active site. A substrate-binding site is contributed by D358.

This sequence belongs to the AB hydrolase superfamily. MetX family. Homodimer.

It is found in the cytoplasm. The enzyme catalyses L-homoserine + succinyl-CoA = O-succinyl-L-homoserine + CoA. Its pathway is amino-acid biosynthesis; L-methionine biosynthesis via de novo pathway; O-succinyl-L-homoserine from L-homoserine: step 1/1. In terms of biological role, transfers a succinyl group from succinyl-CoA to L-homoserine, forming succinyl-L-homoserine. The sequence is that of Homoserine O-succinyltransferase from Teredinibacter turnerae (strain ATCC 39867 / T7901).